Consider the following 100-residue polypeptide: Probable antitoxin MazE1 (100 aa).

Residues 77-100 (PYESEAERSAARARRNARQQRSAQ) are disordered.

In terms of assembly, forms a complex with cognate toxin MazF1.

Its function is as follows. Probable antitoxin component of a type II toxin-antitoxin (TA) system. Labile antitoxin that binds to cognate MazF1 toxin and counteracts its endoribonuclease activity. The chain is Probable antitoxin MazE1 (mazE1) from Mycobacterium bovis (strain ATCC BAA-935 / AF2122/97).